We begin with the raw amino-acid sequence, 151 residues long: Small ribosomal subunit protein uS15 (151 aa).

This sequence belongs to the universal ribosomal protein uS15 family.

The sequence is that of Small ribosomal subunit protein uS15 (RPS13) from Zea mays (Maize).